The following is a 206-amino-acid chain: Sclerostin domain-containing protein 1 (206 aa).

Residues 1 to 23 form the signal peptide; it reads MLPPAIHFYLLPLACILMKSCLA. The N-linked (GlcNAc...) asparagine glycan is linked to Asn-47. 4 disulfides stabilise this stretch: Cys-75/Cys-133, Cys-89/Cys-147, Cys-100/Cys-163, and Cys-104/Cys-165. In terms of domain architecture, CTCK spans 75–170; sequence CRELRSTKYI…TACKCKRYTR (96 aa). N-linked (GlcNAc...) asparagine glycosylation is present at Asn-173. Positions 176-206 are disordered; sequence SHNFESMSPAKPVQHHRERKRASKSSKHSMS. A compositionally biased stretch (basic residues) spans 188-206; it reads VQHHRERKRASKSSKHSMS.

The protein belongs to the sclerostin family. Interacts with BMP2, BMP4, BMP6 and BMP7 with high affinity.

Its subcellular location is the secreted. Functionally, directly antagonizes activity of BMP2, BMP4, BMP6 and BMP7 in a dose-dependent manner. Enhances Wnt signaling and inhibits TGF-beta signaling. May be involved in the onset of endometrial receptivity for implantation/sensitization for the decidual cell reaction. The polypeptide is Sclerostin domain-containing protein 1 (SOSTDC1) (Pongo abelii (Sumatran orangutan)).